The chain runs to 313 residues: MLLRRLPAVHFAKGSRQFGSLQAIADSFVQLHDASGVPWLVLIPTATFALRTVFTLPLSIWQRKRIVKQQELRKVVQSVPPVVKLRLASMTAKANDEELTSSGSAIQTKEETVGALQRGKRQLTPDQITMLSLKEMRKRQKVLFKKYNVQMWKNSVLPLVQVPLWVTMSMGLRKLTDSRLVDTNMPHAHVLQDLSETSWLTHIGSLDLSLPLDAAPMLIPIILGTVSMINVEYNGKTMQATAVGTSGITTATDTQSRTSQTVNSILTATRLSTIFLIGVSTQASVLLSLYWITSQVYSLIQNRILDLLWPYQR.

Residues 209–229 (SLPLDAAPMLIPIILGTVSMI) form a helical membrane-spanning segment. At 230 to 272 (NVEYNGKTMQATAVGTSGITTATDTQSRTSQTVNSILTATRLS) the chain is on the mitochondrial matrix side. Residues 273 to 293 (TIFLIGVSTQASVLLSLYWIT) form a helical membrane-spanning segment. Residues 294 to 313 (SQVYSLIQNRILDLLWPYQR) lie on the Mitochondrial intermembrane side of the membrane.

The protein belongs to the OXA1/ALB3/YidC family.

The protein resides in the mitochondrion inner membrane. In terms of biological role, required for the insertion of integral membrane proteins into the mitochondrial inner membrane. Essential for the activity and assembly of cytochrome c oxidase. This chain is Cytochrome c oxidase assembly protein COX18, mitochondrial (COX18), found in Kluyveromyces lactis (strain ATCC 8585 / CBS 2359 / DSM 70799 / NBRC 1267 / NRRL Y-1140 / WM37) (Yeast).